Here is a 224-residue protein sequence, read N- to C-terminus: MQHPAFYVTGTDTGIGKTMGSTALLHALRARGHRAVGMKPVASGCEHTPHGWRNEDALALQAASDPQPDYAVLNPYALPAPLAPELAAAEVGVTLALEPIVQAFAQLRTQAEVVVVEGVGGWAAPLSATLDQADLVCALQLPVVLVVGVRLGCINHARLTAAAIAADGLQCIGWIANEVDPQMERIEENIGMLRQRLAMPYWGRIPWRPGADAATQAHGLQLPR.

Position 18 (Thr18) interacts with Mg(2+). Lys39 is a catalytic residue. Ser43 is a binding site for substrate. Residues Asp56 and Glu117 each coordinate Mg(2+). Residues Asp56, Glu117–Gly120, and Asn177–Glu178 each bind ATP.

The protein belongs to the dethiobiotin synthetase family. Homodimer. Mg(2+) is required as a cofactor.

The protein resides in the cytoplasm. The catalysed reaction is (7R,8S)-7,8-diammoniononanoate + CO2 + ATP = (4R,5S)-dethiobiotin + ADP + phosphate + 3 H(+). It participates in cofactor biosynthesis; biotin biosynthesis; biotin from 7,8-diaminononanoate: step 1/2. Functionally, catalyzes a mechanistically unusual reaction, the ATP-dependent insertion of CO2 between the N7 and N8 nitrogen atoms of 7,8-diaminopelargonic acid (DAPA, also called 7,8-diammoniononanoate) to form a ureido ring. This is ATP-dependent dethiobiotin synthetase BioD from Xanthomonas axonopodis pv. citri (strain 306).